We begin with the raw amino-acid sequence, 356 residues long: Probable cytosolic iron-sulfur protein assembly protein 1 (356 aa).

WD repeat units lie at residues 34 to 73, 89 to 128, 134 to 173, 179 to 218, 244 to 291, and 319 to 356; these read GHKR…IRAE, GHDS…DYEC, EHSQ…DWYC, AHSS…ECVE, HFSG…ATLR, and AHGS…RIWT.

It belongs to the WD repeat CIA1 family.

Functionally, essential component of the cytosolic iron-sulfur (Fe/S) protein assembly machinery. Required for the maturation of extramitochondrial Fe/S proteins. This is Probable cytosolic iron-sulfur protein assembly protein 1 from Malassezia globosa (strain ATCC MYA-4612 / CBS 7966) (Dandruff-associated fungus).